We begin with the raw amino-acid sequence, 266 residues long: Tropinone reductase homolog At1g07440 (266 aa).

18–42 (LVTGGTKGIGHAIVEEFAGFGAVIH) provides a ligand contact to NADP(+). S151 is a binding site for substrate. The active-site Proton acceptor is Y164.

The protein belongs to the short-chain dehydrogenases/reductases (SDR) family. SDR65C subfamily.

The polypeptide is Tropinone reductase homolog At1g07440 (Arabidopsis thaliana (Mouse-ear cress)).